We begin with the raw amino-acid sequence, 248 residues long: 3,4-dihydroxyphthalate decarboxylase (248 aa).

The Proton donor/acceptor role is filled by Glu-90. 4 residues coordinate a divalent metal cation: Glu-90, His-109, His-111, and His-177.

It belongs to the aldolase class II family. It depends on a divalent metal cation as a cofactor.

It catalyses the reaction 3,4-dihydroxyphthalate + H(+) = 3,4-dihydroxybenzoate + CO2. Its pathway is xenobiotic degradation; phthalate degradation. Its function is as follows. Catalyzes the decarboxylation of 3,4-dihydroxyphthalate to protocatechuate (3,4-dihydroxybenzoate) during phthalate metabolism. This chain is 3,4-dihydroxyphthalate decarboxylase, found in Arthrobacter keyseri.